A 100-amino-acid polypeptide reads, in one-letter code: Small ribosomal subunit protein uS14 (100 aa).

This sequence belongs to the universal ribosomal protein uS14 family. As to quaternary structure, part of the 30S ribosomal subunit. Contacts proteins S3 and S10.

Functionally, binds 16S rRNA, required for the assembly of 30S particles and may also be responsible for determining the conformation of the 16S rRNA at the A site. This Synechococcus sp. (strain CC9311) protein is Small ribosomal subunit protein uS14.